The following is a 629-amino-acid chain: tRNA uridine 5-carboxymethylaminomethyl modification enzyme MnmG (629 aa).

13 to 18 (GGGHAG) serves as a coordination point for FAD. 273–287 (GPRYCPSIEDKIMRF) contributes to the NAD(+) binding site.

Belongs to the MnmG family. Homodimer. Heterotetramer of two MnmE and two MnmG subunits. The cofactor is FAD.

The protein resides in the cytoplasm. Functionally, NAD-binding protein involved in the addition of a carboxymethylaminomethyl (cmnm) group at the wobble position (U34) of certain tRNAs, forming tRNA-cmnm(5)s(2)U34. The sequence is that of tRNA uridine 5-carboxymethylaminomethyl modification enzyme MnmG from Tolumonas auensis (strain DSM 9187 / NBRC 110442 / TA 4).